Consider the following 496-residue polypeptide: Hexokinase-1 (496 aa).

A helical transmembrane segment spans residues 4–24 (VAVGATVVCTAAVCAVAVLVV). The 453-residue stretch at 35 to 487 (GRVLAILKAF…SGIGAALLAA (453 aa)) folds into the Hexokinase domain. The hexokinase small subdomain stretch occupies residues 90–228 (SGDEKGLFYA…GLDMRIAALV (139 aa)). 3 residues coordinate ADP: glycine 104, threonine 105, and asparagine 106. Residues threonine 194, lysine 195, asparagine 229, and aspartate 230 each contribute to the D-glucose site. Positions 229 to 476 (NDTVGTLAGG…GSVEVTHSND (248 aa)) are hexokinase large subdomain. Residue threonine 253 participates in ADP binding. Residues asparagine 256, glutamate 284, and glutamate 315 each contribute to the D-glucose site. Glycine 441 is an ADP binding site.

The protein belongs to the hexokinase family. Interacts with RPT5B in nucleus. Interacts with RHIP1. Interacts with KING1 in mitochondria. Interacts with CLF (via SANT domain) and EZA1/SWN (via SANT domain) in nucleus. As to expression, highly expressed in flowers and siliques, at intermediate levels in roots and stems, and at lower levels in rosette and cauline leaves.

It localises to the mitochondrion outer membrane. The protein resides in the nucleus. The catalysed reaction is a D-hexose + ATP = a D-hexose 6-phosphate + ADP + H(+). The enzyme catalyses D-fructose + ATP = D-fructose 6-phosphate + ADP + H(+). It catalyses the reaction D-glucose + ATP = D-glucose 6-phosphate + ADP + H(+). It functions in the pathway carbohydrate metabolism; hexose metabolism. Its pathway is carbohydrate degradation; glycolysis; D-glyceraldehyde 3-phosphate and glycerone phosphate from D-glucose: step 1/4. Functionally, fructose and glucose phosphorylating enzyme. May be involved in the phosphorylation of glucose during the export from mitochondrion to cytosol. Acts as a sugar sensor which may regulate sugar-dependent gene repression or activation. Mediates the effects of sugar on plant growth and development independently of its catalytic activity or the sugar metabolism. May regulate the execution of program cell death in plant cells. Promotes roots and leaves growth. Together with sugar, is involved in the regulation of the expression of aquaporin genes, and reduces leaf water conductance, to coordinate sugar levels with the loss of water through transpiration. Regulates cell proliferation and expansion early during leaf development. Involved in sucrose-induced leaf growth stimulation independently of GPT2. May participate to the stimulation of hypocotyl elongation under long-day (LD) conditions. Forms a nuclear complex with CLF and EZA1/SWN to target common glucose-responsive genes and regulate glucose signaling. Is required for CLF- and EZA1/SWN-mediated histone H3 trimethylation on 'Lys-27' (H3K27me3) and glucose-mediated gene repression. The chain is Hexokinase-1 from Arabidopsis thaliana (Mouse-ear cress).